The sequence spans 403 residues: Phosphopentomutase (403 aa).

The Mn(2+) site is built by aspartate 13, aspartate 298, histidine 303, aspartate 339, histidine 340, and histidine 351.

It belongs to the phosphopentomutase family. Mn(2+) is required as a cofactor.

It localises to the cytoplasm. It carries out the reaction 2-deoxy-alpha-D-ribose 1-phosphate = 2-deoxy-D-ribose 5-phosphate. The catalysed reaction is alpha-D-ribose 1-phosphate = D-ribose 5-phosphate. The protein operates within carbohydrate degradation; 2-deoxy-D-ribose 1-phosphate degradation; D-glyceraldehyde 3-phosphate and acetaldehyde from 2-deoxy-alpha-D-ribose 1-phosphate: step 1/2. Its function is as follows. Isomerase that catalyzes the conversion of deoxy-ribose 1-phosphate (dRib-1-P) and ribose 1-phosphate (Rib-1-P) to deoxy-ribose 5-phosphate (dRib-5-P) and ribose 5-phosphate (Rib-5-P), respectively. This chain is Phosphopentomutase, found in Streptococcus pyogenes serotype M18 (strain MGAS8232).